A 548-amino-acid chain; its full sequence is Putative F-box protein At1g33020 (548 aa).

The F-box domain occupies Ala4–Arg53. A disordered region spans residues Lys380 to Gly404. The segment covering Ile382–Pro392 has biased composition (pro residues).

The chain is Putative F-box protein At1g33020 from Arabidopsis thaliana (Mouse-ear cress).